The following is a 495-amino-acid chain: Glucokinase (495 aa).

The 481-residue stretch at 3-483 folds into the Hexokinase domain; it reads SALLDEAARI…SGVGAALIAL (481 aa). Residues 57-206 are hexokinase small subdomain; sequence NGTEKGLYLA…GLPVRVAALV (150 aa). Lys93 lines the ATP pocket. A glucose-binding region spans residues 149–175; it reads DLGFTFSFPVRQLGINKGTLIRWTKGF. Residues 207-472 form a hexokinase large subdomain region; sequence NDTVGTLMAR…KKIRIGISKD (266 aa). 472–477 is a binding site for ATP; the sequence is DGSGVG.

The protein belongs to the hexokinase family. In terms of assembly, monomer.

It carries out the reaction D-glucose + ATP = D-glucose 6-phosphate + ADP + H(+). It catalyses the reaction a D-hexose + ATP = a D-hexose 6-phosphate + ADP + H(+). The catalysed reaction is D-mannose + ATP = D-mannose 6-phosphate + ADP + H(+). The enzyme catalyses D-glucosamine + ATP = D-glucosamine 6-phosphate + ADP + H(+). It participates in carbohydrate metabolism; hexose metabolism. The protein operates within carbohydrate degradation; glycolysis; D-glyceraldehyde 3-phosphate and glycerone phosphate from D-glucose: step 1/4. In terms of biological role, the enzyme has great affinity for glucose. Mannose, 2-deoxyglucose and glucosamine can serve as substrates. This chain is Glucokinase (glkA), found in Aspergillus niger.